Reading from the N-terminus, the 490-residue chain is CUGBP Elav-like family member 1 (490 aa).

2 RRM domains span residues 16 to 99 (IKMF…PADS) and 108 to 188 (RKLF…FADT). The tract at residues 283–312 (PSAGSALTTSSSPLSILTSSGSSPSSNNNS) is disordered. An RRM 3 domain is found at 405–483 (ANLFIYHLPQ…KRLKVQLKRS (79 aa)).

This sequence belongs to the CELF/BRUNOL family. Oligomer. Oligomerization is required for RNA-binding and EDEN-dependent deadenylation. Phosphorylated during oocyte maturation and dephosphorylated following egg activation. Dephosphorylation is calcium dependent and correlates with the increase in the activity of EDEN-dependent deadenylation.

It localises to the nucleus. It is found in the cytoplasm. Its function is as follows. RNA-binding protein implicated in the regulation of several post-transcriptional events. May be involved in pre-mRNA alternative splicing, mRNA translation activation and stability. Mediates the rapid and sequence-specific cytoplasmic deadenylation of EDEN-containing maternal mRNAs following fertilization. Binds to AU-rich sequences (AREs) of jun mRNA. Binds to the embryonic deadenylation element (EDEN) motif localized in the 3'-UTR of maternal mRNAs. Binds to RNA containing several repeats of the consensus sequence 5'-UGU-3'. EDEN-dependent deadenylation is enhanced by the presence of an additional cis element composed of three AUU repeats. This Xenopus tropicalis (Western clawed frog) protein is CUGBP Elav-like family member 1 (celf1).